The primary structure comprises 386 residues: Na(+)/H(+) antiporter NhaA (386 aa).

10 helical membrane-spanning segments follow: residues 10–30 (EFSI…NVAP), 45–65 (LSFH…IAAV), 84–104 (LNPL…YLAL), 116–136 (GWGI…RLIF), 142–162 (VIAF…VIIA), 169–189 (VLPV…IAFI), 261–281 (IIVD…GFSA), 287–307 (WLVF…FALL), 323–343 (HLLV…FVAG), and 358–378 (GAIL…LLGI).

This sequence belongs to the NhaA Na(+)/H(+) (TC 2.A.33) antiporter family.

Its subcellular location is the cell inner membrane. It catalyses the reaction Na(+)(in) + 2 H(+)(out) = Na(+)(out) + 2 H(+)(in). Functionally, na(+)/H(+) antiporter that extrudes sodium in exchange for external protons. The polypeptide is Na(+)/H(+) antiporter NhaA (Geotalea uraniireducens (strain Rf4) (Geobacter uraniireducens)).